We begin with the raw amino-acid sequence, 118 residues long: Cell division protein FtsB (118 aa).

Residues 1 to 6 (MRNWRW) lie on the Cytoplasmic side of the membrane. A helical membrane pass occupies residues 7–24 (LLLVLAALLAWLQHRFWF). Over 25 to 118 (GPGNSGEVRM…DLSQPRREKR (94 aa)) the chain is Periplasmic. Residues 30–66 (GEVRMLQVQIVQQHQENERLRQRNASLAAEVKNLKDG) are a coiled coil. The interval 98–118 (LPNDTSADHGVDLSQPRREKR) is disordered. Residues 103 to 118 (SADHGVDLSQPRREKR) are compositionally biased toward basic and acidic residues.

It belongs to the FtsB family. Part of a complex composed of FtsB, FtsL and FtsQ.

The protein resides in the cell inner membrane. In terms of biological role, essential cell division protein. May link together the upstream cell division proteins, which are predominantly cytoplasmic, with the downstream cell division proteins, which are predominantly periplasmic. The chain is Cell division protein FtsB from Xylella fastidiosa (strain M12).